A 290-amino-acid polypeptide reads, in one-letter code: Nucleoid occlusion protein (290 aa).

A DNA-binding region (H-T-H motif) is located at residues E153 to L172.

The protein belongs to the ParB family.

The protein localises to the cytoplasm. It is found in the nucleoid. Functionally, effects nucleoid occlusion by binding relatively nonspecifically to DNA and preventing the assembly of the division machinery in the vicinity of the nucleoid, especially under conditions that disturb the cell cycle. It helps to coordinate cell division and chromosome segregation by preventing the formation of the Z ring through the nucleoid, which would cause chromosome breakage. This Bacillus cytotoxicus (strain DSM 22905 / CIP 110041 / 391-98 / NVH 391-98) protein is Nucleoid occlusion protein.